The chain runs to 397 residues: 8-amino-7-oxononanoate synthase (397 aa).

Arginine 24 contributes to the substrate binding site. Residue 110–111 participates in pyridoxal 5'-phosphate binding; that stretch reads GY. Histidine 135 provides a ligand contact to substrate. Serine 183, histidine 211, and threonine 240 together coordinate pyridoxal 5'-phosphate. Lysine 243 is subject to N6-(pyridoxal phosphate)lysine. Residue threonine 357 coordinates substrate.

Belongs to the class-II pyridoxal-phosphate-dependent aminotransferase family. BioF subfamily. Homodimer. It depends on pyridoxal 5'-phosphate as a cofactor.

It catalyses the reaction 6-carboxyhexanoyl-[ACP] + L-alanine + H(+) = (8S)-8-amino-7-oxononanoate + holo-[ACP] + CO2. It participates in cofactor biosynthesis; biotin biosynthesis. Functionally, catalyzes the decarboxylative condensation of pimeloyl-[acyl-carrier protein] and L-alanine to produce 8-amino-7-oxononanoate (AON), [acyl-carrier protein], and carbon dioxide. The polypeptide is 8-amino-7-oxononanoate synthase (Hydrogenovibrio crunogenus (strain DSM 25203 / XCL-2) (Thiomicrospira crunogena)).